The following is a 245-amino-acid chain: tRNA (guanine-N(1)-)-methyltransferase (245 aa).

Residues glycine 111 and 131–136 (MGDYVL) each bind S-adenosyl-L-methionine.

Belongs to the RNA methyltransferase TrmD family. In terms of assembly, homodimer.

The protein resides in the cytoplasm. The catalysed reaction is guanosine(37) in tRNA + S-adenosyl-L-methionine = N(1)-methylguanosine(37) in tRNA + S-adenosyl-L-homocysteine + H(+). In terms of biological role, specifically methylates guanosine-37 in various tRNAs. This Staphylococcus aureus (strain USA300) protein is tRNA (guanine-N(1)-)-methyltransferase.